Here is a 425-residue protein sequence, read N- to C-terminus: High-affinity branched-chain amino acid transport system permease protein LivM (425 aa).

11 helical membrane passes run 6–26, 45–65, 92–112, 120–140, 145–165, 167–187, 191–211, 260–280, 311–331, 353–373, and 387–407; these read IAMA…FMGV, WQWV…RPAF, FLVA…RGTV, IYII…LLVL, FYAI…LGFW, CLPI…FPVL, GDYL…LLLN, RVIF…FVIN, IKLT…TLFA, IVVL…ILLV, and MLML…GLLP.

The protein belongs to the binding-protein-dependent transport system permease family. LivHM subfamily.

The protein localises to the cell inner membrane. In terms of biological role, part of the binding-protein-dependent transport system for branched-chain amino acids. Probably responsible for the translocation of the substrates across the membrane. This chain is High-affinity branched-chain amino acid transport system permease protein LivM (livM), found in Escherichia coli (strain K12).